A 252-amino-acid chain; its full sequence is uncharacterized protein (252 aa).

A Clp R domain is found at Phe-96–Ala-238. Repeat regions lie at residues Phe-99–Thr-164 and Phe-172–Ala-238.

Belongs to the ClpA/ClpB family. ClpC subfamily.

This is an uncharacterized protein from Mycobacterium bovis (strain ATCC BAA-935 / AF2122/97).